The chain runs to 352 residues: N-acetyl-gamma-glutamyl-phosphate reductase (352 aa).

Residue Cys151 is part of the active site.

It belongs to the NAGSA dehydrogenase family. Type 1 subfamily.

The protein localises to the cytoplasm. It catalyses the reaction N-acetyl-L-glutamate 5-semialdehyde + phosphate + NADP(+) = N-acetyl-L-glutamyl 5-phosphate + NADPH + H(+). Its pathway is amino-acid biosynthesis; L-arginine biosynthesis; N(2)-acetyl-L-ornithine from L-glutamate: step 3/4. In terms of biological role, catalyzes the NADPH-dependent reduction of N-acetyl-5-glutamyl phosphate to yield N-acetyl-L-glutamate 5-semialdehyde. This chain is N-acetyl-gamma-glutamyl-phosphate reductase, found in Renibacterium salmoninarum (strain ATCC 33209 / DSM 20767 / JCM 11484 / NBRC 15589 / NCIMB 2235).